Here is a 287-residue protein sequence, read N- to C-terminus: 4-hydroxybenzoate octaprenyltransferase (287 aa).

6 helical membrane-spanning segments follow: residues 30-50 (ALWIASDGHPTWPLLVIFTVG), 89-109 (WEAVALAAALSLLAFLLILPL), 133-153 (FFAIPQAYLGIAFGFGIPMAF), 158-178 (GHVPLLAWVMLLANVFWSVAY), 199-221 (ALTFGRFDVAAIMICYAATLGIY), and 267-287 (NNWLGGALFVGIAAHYAAGSF).

The protein belongs to the UbiA prenyltransferase family. It depends on Mg(2+) as a cofactor.

It localises to the cell inner membrane. It carries out the reaction all-trans-octaprenyl diphosphate + 4-hydroxybenzoate = 4-hydroxy-3-(all-trans-octaprenyl)benzoate + diphosphate. Its pathway is cofactor biosynthesis; ubiquinone biosynthesis. Functionally, catalyzes the prenylation of para-hydroxybenzoate (PHB) with an all-trans polyprenyl group. Mediates the second step in the final reaction sequence of ubiquinone-8 (UQ-8) biosynthesis, which is the condensation of the polyisoprenoid side chain with PHB, generating the first membrane-bound Q intermediate 3-octaprenyl-4-hydroxybenzoate. The protein is 4-hydroxybenzoate octaprenyltransferase of Paraburkholderia phytofirmans (strain DSM 17436 / LMG 22146 / PsJN) (Burkholderia phytofirmans).